The primary structure comprises 127 residues: Large ribosomal subunit protein eL24 (127 aa).

The interval Lys-93–Lys-127 is disordered. Positions Lys-115–Lys-127 are enriched in basic residues.

It belongs to the eukaryotic ribosomal protein eL24 family.

In Dictyostelium discoideum (Social amoeba), this protein is Large ribosomal subunit protein eL24 (rpl24).